The chain runs to 343 residues: N-acetyl-gamma-glutamyl-phosphate reductase (343 aa).

The active site involves C148.

Belongs to the NAGSA dehydrogenase family. Type 1 subfamily.

The protein localises to the cytoplasm. The catalysed reaction is N-acetyl-L-glutamate 5-semialdehyde + phosphate + NADP(+) = N-acetyl-L-glutamyl 5-phosphate + NADPH + H(+). It functions in the pathway amino-acid biosynthesis; L-arginine biosynthesis; N(2)-acetyl-L-ornithine from L-glutamate: step 3/4. Catalyzes the NADPH-dependent reduction of N-acetyl-5-glutamyl phosphate to yield N-acetyl-L-glutamate 5-semialdehyde. In Caldicellulosiruptor saccharolyticus (strain ATCC 43494 / DSM 8903 / Tp8T 6331), this protein is N-acetyl-gamma-glutamyl-phosphate reductase.